A 309-amino-acid chain; its full sequence is Taste receptor type 2 member 31 (309 aa).

Residues 1 to 2 (MT) lie on the Extracellular side of the membrane. The helical transmembrane segment at 3–23 (TFIPIIFSSLVMVMFVTGNFA) threads the bilayer. Topologically, residues 24–55 (NGFIALVNSIESVKRQKISYADQILTALAVSR) are cytoplasmic. The chain crosses the membrane as a helical span at residues 56–76 (IGLLWVLLLNWYSTVLNPAFY). Residues 77 to 100 (SVEVRTTAYNVWAVTGHFSNWLAT) lie on the Extracellular side of the membrane. The helical transmembrane segment at 101–121 (SLSIFYLLKIANFSNLIFLHL) threads the bilayer. Residues 122–126 (KRRVK) are Cytoplasmic-facing. Residues 127–147 (SVILVMLLGPLLFLACQLFVI) form a helical membrane-spanning segment. The Extracellular portion of the chain corresponds to 148–181 (NMKEIVQTKEYEGNXTWKIKLRSAVYLSDATVTT). N-linked (GlcNAc...) asparagine glycosylation is present at Asn161. A helical membrane pass occupies residues 182–202 (LGNLVPFTLTLLCFLLLICSL). Over 203 to 229 (CKHLKKMQLHGKGSQDPSMKVHIKALQ) the chain is Cytoplasmic. Residues 230–250 (TVTSFLLLCAIYFLSIMISVW) form a helical membrane-spanning segment. The Extracellular portion of the chain corresponds to 251–259 (SLGSLKNKP). The chain crosses the membrane as a helical span at residues 260–280 (VFMFCKAMRFSYPSIHPFILI). The Cytoplasmic segment spans residues 281–309 (WGNKKLKQTFLSVLQQVRYWVKGEKPSSP).

The protein belongs to the G-protein coupled receptor T2R family.

The protein localises to the membrane. In terms of biological role, receptor that may play a role in the perception of bitterness and is gustducin-linked. May play a role in sensing the chemical composition of the gastrointestinal content. The activity of this receptor may stimulate alpha gustducin, mediate PLC-beta-2 activation and lead to the gating of TRPM5. This chain is Taste receptor type 2 member 31 (TAS2R31), found in Gorilla gorilla gorilla (Western lowland gorilla).